Here is a 284-residue protein sequence, read N- to C-terminus: MDGIKKKMIAMKLEKENAMERAVQYEAQLKQKEEEQEKKETEIGELNNRMKQAQTELDEIQEALQDSLNKMEETDKRATNAEAEVARMTRRIRLLEEDLEVSSSRLTETLAKFDEASKTAEESERGRKELEIRSIADDEGLSQLEDQQKEGKYIAEDADRKYDEAARKLAIVEVDFERAESRLEAAESKIVELEEELRVVGNNMKALEISEQESAQREESYEETIRDLTERLKAAEQRAAEAERQVSKLQNEVDHLEDDLLSEKIRYKDLSGGLDQTFAELTGY.

Positions methionine 1–tyrosine 284 form a coiled coil. Basic and acidic residues-rich tracts occupy residues leucine 29–glutamate 42 and alanine 111–alanine 136. 2 disordered regions span residues leucine 29–arginine 49 and alanine 111–lysine 149.

This sequence belongs to the tropomyosin family.

Tropomyosin, in association with the troponin complex, plays a central role in the calcium dependent regulation of muscle contraction. The protein is Tropomyosin of Clonorchis sinensis (Chinese liver fluke).